Here is a 223-residue protein sequence, read N- to C-terminus: Ras-related protein Rab-37 (223 aa).

Over residues 1 to 13 (MTGTPGAATAGDG) the composition is skewed to low complexity. The tract at residues 1–22 (MTGTPGAATAGDGEAPERSPPF) is disordered. T2 bears the N-acetylthreonine mark. Positions 38, 39, 40, 41, 42, 43, 44, and 62 each coordinate GTP. T43 provides a ligand contact to Mg(2+). Short sequence motifs (switch) lie at residues 52 to 67 (GAFL…GIDS) and 85 to 102 (DTAG…YYRD). Residues T62 and D85 each contribute to the Mg(2+) site. GTP is bound by residues G88, N143, K144, D146, S173, A174, and K175. Residues C219 and C220 are each lipidated (S-geranylgeranyl cysteine). C220 carries the cysteine methyl ester modification. Positions 221 to 223 (SFV) are cleaved as a propeptide — removed in mature form.

It belongs to the small GTPase superfamily. Rab family. In terms of assembly, interacts with RIMS1. Interacts (in GDP-bound form) with RPGR, RPGR functions as guanine exchange factor (GEF). Mg(2+) serves as cofactor. Expressed in the retina (at protein level). Specifically expressed in the bone marrow mast cells.

Its subcellular location is the cytoplasmic vesicle. The protein localises to the cell projection. The protein resides in the cilium. The catalysed reaction is GTP + H2O = GDP + phosphate + H(+). With respect to regulation, regulated by guanine nucleotide exchange factors (GEFs) including RPGR which promote the exchange of bound GDP for free GTP. Regulated by GTPase activating proteins (GAPs) which increase the GTP hydrolysis activity. Inhibited by GDP dissociation inhibitors (GDIs). The small GTPases Rab are key regulators of intracellular membrane trafficking, from the formation of transport vesicles to their fusion with membranes. Rabs cycle between an inactive GDP-bound form and an active GTP-bound form that is able to recruit to membranes different sets of downstream effectors directly responsible for vesicle formation, movement, tethering and fusion. Acts as an organizer for autophagosome biogenesis in a GTP-dependent manner. Involved in retinal homeostasis by autophagy regulation. The chain is Ras-related protein Rab-37 from Mus musculus (Mouse).